The chain runs to 270 residues: Replication protein A 32 kDa subunit (270 aa).

The residue at position 1 (Met1) is an N-acetylmethionine. Residues Ser4 and Ser8 each carry the phosphoserine; by PRKDC modification. Thr21 carries the phosphothreonine; by PRKDC modification. The tract at residues 21–40 (TQSPGGFGSPAPSQAEKKSR) is disordered. The residue at position 23 (Ser23) is a Phosphoserine; by CDK2. Ser29 is subject to Phosphoserine; by CDK1. Ser33 is subject to Phosphoserine; by PRKDC. Glycyl lysine isopeptide (Lys-Gly) (interchain with G-Cter in ubiquitin) cross-links involve residues Lys37 and Lys38. A DNA-binding region (OB) is located at residues 74 to 148 (VTIVGIIRHA…KSLVAFKIMP (75 aa)). The interaction with RAD52, TIPIN, UNG and XPA stretch occupies residues 187–270 (GMSEAGNFGG…DDHFKSTDAE (84 aa)).

It belongs to the replication factor A protein 2 family. In terms of assembly, component of the replication protein A complex (RPA/RP-A), a heterotrimeric complex composed of RPA1, RPA2 and RPA3. Interacts with PRPF19; the PRP19-CDC5L complex is recruited to the sites of DNA repair where it ubiquitinates the replication protein A complex (RPA). Interacts with SERTAD3. Interacts with TIPIN. Interacts with TIMELESS. Interacts with PPP4R2; the interaction is direct, DNA damage-dependent and mediates the recruitment of the PP4 catalytic subunit PPP4C. Interacts (hyperphosphorylated) with RAD51. Interacts with SMARCAL1; the interaction is direct and mediates the recruitment to the RPA complex of SMARCAL1. Interacts with RAD52 and XPA; those interactions are direct and associate RAD52 and XPA to the RPA complex. Interacts with FBH1. Interacts with ETAA1; the interaction is direct and promotes ETAA1 recruitment at stalled replication forks. Interacts with DDI2. Interacts (in unphosphorylated form via N-terminus) with EIF4EBP3; the interaction enhances EIF4EBP3-mediated inhibition of EIF4E-mediated mRNA nuclear export. Post-translationally, differentially phosphorylated throughout the cell cycle, becoming phosphorylated at the G1-S transition and dephosphorylated in late mitosis. Mainly phosphorylated at Ser-23 and Ser-29, by cyclin A-CDK2 and cyclin B-CDK1, respectively during DNA replication and mitosis. Dephosphorylation may require the serine/threonine-protein phosphatase 4. Phosphorylation at Ser-23 and Ser-29 is a prerequisite for further phosphorylation. Becomes hyperphosphorylated on additional residues including Ser-4, Ser-8, Thr-21 and Ser-33 in response to DNA damage. Hyperphosphorylation is mediated by ATM, ATR and PRKDC. Primarily recruited to DNA repair nuclear foci as a hypophosphorylated form it undergoes subsequent hyperphosphorylation, catalyzed by ATR. Hyperphosphorylation is required for RAD51 recruitment to chromatin and efficient DNA repair. Phosphorylation at Thr-21 depends upon RFWD3 presence. In terms of processing, DNA damage-induced 'Lys-63'-linked polyubiquitination by PRPF19 mediates ATRIP recruitment to the RPA complex at sites of DNA damage and activation of ATR. Ubiquitinated by RFWD3 at stalled replication forks in response to DNA damage: ubiquitination by RFWD3 does not lead to degradation by the proteasome and promotes removal of the RPA complex from stalled replication forks, promoting homologous recombination.

The protein resides in the nucleus. Its subcellular location is the PML body. Functionally, as part of the heterotrimeric replication protein A complex (RPA/RP-A), binds and stabilizes single-stranded DNA intermediates, that form during DNA replication or upon DNA stress. It prevents their reannealing and in parallel, recruits and activates different proteins and complexes involved in DNA metabolism. Thereby, it plays an essential role both in DNA replication and the cellular response to DNA damage. In the cellular response to DNA damage, the RPA complex controls DNA repair and DNA damage checkpoint activation. Through recruitment of ATRIP activates the ATR kinase a master regulator of the DNA damage response. It is required for the recruitment of the DNA double-strand break repair factors RAD51 and RAD52 to chromatin in response to DNA damage. Also recruits to sites of DNA damage proteins like XPA and XPG that are involved in nucleotide excision repair and is required for this mechanism of DNA repair. Also plays a role in base excision repair (BER) probably through interaction with UNG. Also recruits SMARCAL1/HARP, which is involved in replication fork restart, to sites of DNA damage. May also play a role in telomere maintenance. This chain is Replication protein A 32 kDa subunit (RPA2), found in Pongo abelii (Sumatran orangutan).